We begin with the raw amino-acid sequence, 631 residues long: Mitochondrial Rho GTPase (631 aa).

The Cytoplasmic portion of the chain corresponds to 1 to 605 (MRAGRVRPLR…TQADLKSSTF (605 aa)). Positions 15–181 (KKDVRILLVG…FYYAQKAVLH (167 aa)) constitute a Miro 1 domain. Positions 27, 29, 30, 31, and 32 each coordinate GTP. Position 31 (T31) interacts with Mg(2+). D70 is a binding site for Mg(2+). S72 is a binding site for GTP. The residue at position 105 (K105) is an N6-acetyllysine. GTP contacts are provided by N131, K132, D134, A162, and K163. A Glycyl lysine isopeptide (Lys-Gly) (interchain with G-Cter in ubiquitin) cross-link involves residue K166. One can recognise an EF-hand 1 domain in the interval 197-232 (ACIKALTRIFKISDQDNDGTLNDAELNFFQRICFNT). Residues D210, D212, D214, T216, and E221 each contribute to the Ca(2+) site. Residue K248 forms a Glycyl lysine isopeptide (Lys-Gly) (interchain with G-Cter in ubiquitin) linkage. Positions 317 to 352 (HAYLFLQSTFDKHDLDRDCALSPDELKDLFQVFPYI) constitute an EF-hand 2 domain. D330, D332, D334, A336, and E341 together coordinate Ca(2+). One can recognise a Miro 2 domain in the interval 429-592 (RNVFRCNVIG…FVKLTTMAMY (164 aa)). The GTP site is built by G441, C442, G443, K444, T445, G446, K460, K541, D543, T571, and C572. G441 contacts Mg(2+). K585 is covalently cross-linked (Glycyl lysine isopeptide (Lys-Gly) (interchain with G-Cter in ubiquitin)). Residues 606–628 (WLRASFGATVFAVVGFAMYRALL) form a helical; Anchor for type IV membrane protein membrane-spanning segment. At 629–631 (KQR) the chain is on the mitochondrial intermembrane side.

It belongs to the mitochondrial Rho GTPase family. In terms of assembly, homodimer. Interacts with the kinesin-binding proteins TRAK1/OIP106 and TRAK2/GRIF1, forming a link between mitochondria and the trafficking apparatus of the microtubules. Interacts with RAP1GDS1. Interacts with ARMCX1. Found in a complex with KIF5B, OGT, RHOT2 and TRAK1. Ubiquitinated by PRKN during mitophagy, leading to its degradation and enhancement of mitophagy. Deubiquitinated by USP30. In terms of processing, acetylation on Lys-105 decreases sensitivity of mitochondrial transport to elevated Ca(2+) levels, increases mitochondrial transport and promotes axon growth. Deacetylated by HDAC6 which blocks mitochondrial transport and mediates axon growth inhibition.

The protein localises to the mitochondrion outer membrane. The catalysed reaction is GTP + H2O = GDP + phosphate + H(+). The enzyme catalyses ATP + H2O = ADP + phosphate + H(+). It carries out the reaction UTP + H2O = UDP + phosphate + H(+). In terms of biological role, atypical mitochondrial nucleoside-triphosphatase (NTPase) involved in mitochondrial trafficking. Probably involved in control of anterograde transport of mitochondria and their subcellular distribution. Promotes mitochondrial fission during high calcium conditions. Can hydrolyze GTP, ATP and UTP. The sequence is that of Mitochondrial Rho GTPase from Rattus norvegicus (Rat).